The sequence spans 373 residues: Peptide chain release factor 2 (373 aa).

Position 252 is an N5-methylglutamine (Gln-252).

Belongs to the prokaryotic/mitochondrial release factor family. Post-translationally, methylated by PrmC. Methylation increases the termination efficiency of RF2.

It localises to the cytoplasm. In terms of biological role, peptide chain release factor 2 directs the termination of translation in response to the peptide chain termination codons UGA and UAA. The polypeptide is Peptide chain release factor 2 (Staphylococcus saprophyticus subsp. saprophyticus (strain ATCC 15305 / DSM 20229 / NCIMB 8711 / NCTC 7292 / S-41)).